A 106-amino-acid chain; its full sequence is NADH-quinone oxidoreductase subunit K (106 aa).

3 consecutive transmembrane segments (helical) span residues 10–30, 35–55, and 67–87; these read IHYY…GVMV, VLIF…FVTF, and VVFF…AIVI.

The protein belongs to the complex I subunit 4L family. As to quaternary structure, NDH-1 is composed of 14 different subunits. Subunits NuoA, H, J, K, L, M, N constitute the membrane sector of the complex.

The protein localises to the cell inner membrane. It carries out the reaction a quinone + NADH + 5 H(+)(in) = a quinol + NAD(+) + 4 H(+)(out). In terms of biological role, NDH-1 shuttles electrons from NADH, via FMN and iron-sulfur (Fe-S) centers, to quinones in the respiratory chain. The immediate electron acceptor for the enzyme in this species is believed to be ubiquinone. Couples the redox reaction to proton translocation (for every two electrons transferred, four hydrogen ions are translocated across the cytoplasmic membrane), and thus conserves the redox energy in a proton gradient. The polypeptide is NADH-quinone oxidoreductase subunit K (Leptospira borgpetersenii serovar Hardjo-bovis (strain JB197)).